A 418-amino-acid polypeptide reads, in one-letter code: NADH-quinone oxidoreductase subunit D (418 aa).

The protein belongs to the complex I 49 kDa subunit family. As to quaternary structure, NDH-1 is composed of 14 different subunits. Subunits NuoB, C, D, E, F, and G constitute the peripheral sector of the complex.

The protein localises to the cell inner membrane. The catalysed reaction is a quinone + NADH + 5 H(+)(in) = a quinol + NAD(+) + 4 H(+)(out). Its function is as follows. NDH-1 shuttles electrons from NADH, via FMN and iron-sulfur (Fe-S) centers, to quinones in the respiratory chain. The immediate electron acceptor for the enzyme in this species is believed to be ubiquinone. Couples the redox reaction to proton translocation (for every two electrons transferred, four hydrogen ions are translocated across the cytoplasmic membrane), and thus conserves the redox energy in a proton gradient. The sequence is that of NADH-quinone oxidoreductase subunit D from Neisseria meningitidis serogroup C (strain 053442).